The sequence spans 90 residues: Acylphosphatase (90 aa).

The 88-residue stretch at 3–90 folds into the Acylphosphatase-like domain; the sequence is QYHMIADGRV…KGYRTFSISY (88 aa). Active-site residues include R18 and N36.

It belongs to the acylphosphatase family.

The catalysed reaction is an acyl phosphate + H2O = a carboxylate + phosphate + H(+). The polypeptide is Acylphosphatase (acyP) (Bacillus velezensis (strain DSM 23117 / BGSC 10A6 / LMG 26770 / FZB42) (Bacillus amyloliquefaciens subsp. plantarum)).